A 424-amino-acid polypeptide reads, in one-letter code: Nicotinate phosphoribosyltransferase (424 aa).

Phosphohistidine; by autocatalysis is present on H242.

It belongs to the NAPRTase family. Post-translationally, transiently phosphorylated on a His residue during the reaction cycle. Phosphorylation strongly increases the affinity for substrates and increases the rate of nicotinate D-ribonucleotide production. Dephosphorylation regenerates the low-affinity form of the enzyme, leading to product release.

The catalysed reaction is nicotinate + 5-phospho-alpha-D-ribose 1-diphosphate + ATP + H2O = nicotinate beta-D-ribonucleotide + ADP + phosphate + diphosphate. The protein operates within cofactor biosynthesis; NAD(+) biosynthesis; nicotinate D-ribonucleotide from nicotinate: step 1/1. Functionally, catalyzes the synthesis of beta-nicotinate D-ribonucleotide from nicotinate and 5-phospho-D-ribose 1-phosphate at the expense of ATP. This Bartonella bacilliformis (strain ATCC 35685 / KC583 / Herrer 020/F12,63) protein is Nicotinate phosphoribosyltransferase.